The sequence spans 616 residues: Homeodomain-interacting protein kinase 4 (616 aa).

Positions 11 to 347 constitute a Protein kinase domain; it reads YDIIEVLGKG…PSAALRHPFV (337 aa). ATP-binding positions include 17–25 and Lys-40; that span reads LGKGTFGEV. Asp-136 functions as the Proton acceptor in the catalytic mechanism. Positions 485-616 are disordered; the sequence is RHKARKPPAG…SFLQHVTGHH (132 aa). Residues 496–511 show a composition bias toward polar residues; that stretch reads KSDSNLSNLIRLSQVS. Ser-511 is subject to Phosphoserine.

This sequence belongs to the protein kinase superfamily. CMGC Ser/Thr protein kinase family. HIPK subfamily. Post-translationally, autophosphorylated.

The protein localises to the cytoplasm. The catalysed reaction is L-seryl-[protein] + ATP = O-phospho-L-seryl-[protein] + ADP + H(+). It carries out the reaction L-threonyl-[protein] + ATP = O-phospho-L-threonyl-[protein] + ADP + H(+). Protein kinase that phosphorylates TP53, and thus induces TP53 repression of BIRC5 promoter. May act as a corepressor of transcription factors (Potential). The polypeptide is Homeodomain-interacting protein kinase 4 (HIPK4) (Macaca fascicularis (Crab-eating macaque)).